The sequence spans 715 residues: Palmitoyltransferase ZDHHC5 (715 aa).

Residues 1–13 (MPAESGKRFKPSK) are Cytoplasmic-facing. Residues 14 to 34 (YVPVSAAAIFLVGATTLFFAF) traverse the membrane as a helical segment. At 35–38 (TCPG) the chain is on the extracellular side. Residues 39-59 (LSLYVSPAVPIYNAIMFLFVL) traverse the membrane as a helical segment. The Cytoplasmic portion of the chain corresponds to 60–148 (ANFSMATFMD…NCIGRRNYRY (89 aa)). Tyr91 is subject to Phosphotyrosine. A DHHC domain is found at 104–154 (KWCATCRFYRPPRCSHCSVCDNCVEEFDHHCPWVNNCIGRRNYRYFFLFLL). The active-site S-palmitoyl cysteine intermediate is Cys134. A helical transmembrane segment spans residues 149–169 (FFLFLLSLTAHIMGVFGFGLL). Residues 170–191 (YVLYHIEELSGVRTAVTMAVMC) are Extracellular-facing. A helical membrane pass occupies residues 192–212 (VAGLFFIPVAGLTGFHVVLVA). At 213–715 (RGRTTNEQVT…VGGTTYEISV (503 aa)) the chain is on the cytoplasmic side. Ser247 is modified (phosphoserine). A disordered region spans residues 289–715 (GELRRTKSKG…VGGTTYEISV (427 aa)). Thr294 bears the Phosphothreonine mark. Phosphoserine is present on residues Ser296 and Ser299. The residue at position 303 (Thr303) is a Phosphothreonine. Phosphoserine is present on Ser345. Residues Thr348 and Thr350 each carry the phosphothreonine modification. Low complexity predominate over residues 359–373 (SSSSTSAAMPHSSSA). Phosphoserine is present on residues Ser380, Ser398, Ser406, and Ser409. Thr411 carries the post-translational modification Phosphothreonine. Phosphoserine occurs at positions 415, 425, 429, and 432. The segment covering 422–432 (SSGSRSSSLKS) has biased composition (low complexity). At Thr436 the chain carries Phosphothreonine. The segment covering 442-478 (QLQSIRSEGTTSTSYKSLANQTRNGSLSYDSLLTPSD) has biased composition (polar residues). Phosphoserine occurs at positions 529 and 554. Omega-N-methylarginine is present on Arg617. Ser621 bears the Phosphoserine mark. Thr659 is modified (phosphothreonine). The segment covering 666–677 (LKTTYSKSNGQP) has biased composition (polar residues). Phosphoserine is present on residues Ser684 and Ser694. Arg697 bears the Omega-N-methylarginine mark.

It belongs to the DHHC palmitoyltransferase family. ERF2/ZDHHC9 subfamily.

It is found in the cell membrane. The enzyme catalyses L-cysteinyl-[protein] + hexadecanoyl-CoA = S-hexadecanoyl-L-cysteinyl-[protein] + CoA. Palmitoyltransferase that catalyzes the addition of palmitate onto various protein substrates such as CTNND2, CD36, GSDMD, NLRP3, NOD1, NOD2, STAT3 and S1PR1 thus plays a role in various biological processes including cell adhesion, inflammation, fatty acid uptake, bacterial sensing or cardiac functions. Plays an important role in the regulation of synapse efficacy by mediating palmitoylation of delta-catenin/CTNND2, thereby increasing synaptic delivery and surface stabilization of alpha-amino-3-hydroxy-5-methyl-4-isoxazole propionic acid receptors (AMPARs). Under basal conditions, remains at the synaptic membrane through FYN-mediated phosphorylation that prevents association with endocytic proteins. Neuronal activity enhances the internalization and trafficking of DHHC5 from spines to dendritic shafts where it palmitoylates delta-catenin/CTNND2. Regulates cell adhesion at the plasma membrane by palmitoylating GOLGA7B and DSG2. Plays a role in innate immune response by mediating the palmitoylation of NOD1 and NOD2 and their proper recruitment to the bacterial entry site and phagosomes. Also participates in fatty acid uptake by palmitoylating CD36 and thereby targeting it to the plasma membrane. Upon binding of fatty acids to CD36, gets phosphorylated by LYN leading to inactivation and subsequent CD36 caveolar endocytosis. Controls oligodendrocyte development by catalyzing STAT3 palmitoylation. Acts as a regulator of inflammatory response by mediating palmitoylation of NLRP3 and GSDMD. Palmitoylates NLRP3 to promote inflammasome assembly and activation. Activates pyroptosis by catalyzing palmitoylation of gasdermin-D (GSDMD), thereby promoting membrane translocation and pore formation of GSDMD. The polypeptide is Palmitoyltransferase ZDHHC5 (ZDHHC5) (Pan troglodytes (Chimpanzee)).